Consider the following 109-residue polypeptide: Nucleoid-associated protein LJ_0424 (109 aa).

The protein belongs to the YbaB/EbfC family. Homodimer.

The protein resides in the cytoplasm. The protein localises to the nucleoid. Functionally, binds to DNA and alters its conformation. May be involved in regulation of gene expression, nucleoid organization and DNA protection. In Lactobacillus johnsonii (strain CNCM I-12250 / La1 / NCC 533), this protein is Nucleoid-associated protein LJ_0424.